Reading from the N-terminus, the 94-residue chain is Aspartyl/glutamyl-tRNA(Asn/Gln) amidotransferase subunit C (94 aa).

This sequence belongs to the GatC family. Heterotrimer of A, B and C subunits.

The enzyme catalyses L-glutamyl-tRNA(Gln) + L-glutamine + ATP + H2O = L-glutaminyl-tRNA(Gln) + L-glutamate + ADP + phosphate + H(+). It carries out the reaction L-aspartyl-tRNA(Asn) + L-glutamine + ATP + H2O = L-asparaginyl-tRNA(Asn) + L-glutamate + ADP + phosphate + 2 H(+). Its function is as follows. Allows the formation of correctly charged Asn-tRNA(Asn) or Gln-tRNA(Gln) through the transamidation of misacylated Asp-tRNA(Asn) or Glu-tRNA(Gln) in organisms which lack either or both of asparaginyl-tRNA or glutaminyl-tRNA synthetases. The reaction takes place in the presence of glutamine and ATP through an activated phospho-Asp-tRNA(Asn) or phospho-Glu-tRNA(Gln). In Solidesulfovibrio magneticus (strain ATCC 700980 / DSM 13731 / RS-1) (Desulfovibrio magneticus), this protein is Aspartyl/glutamyl-tRNA(Asn/Gln) amidotransferase subunit C.